Reading from the N-terminus, the 101-residue chain is Small ribosomal subunit protein uS14 (101 aa).

Belongs to the universal ribosomal protein uS14 family. Part of the 30S ribosomal subunit. Contacts proteins S3 and S10.

In terms of biological role, binds 16S rRNA, required for the assembly of 30S particles and may also be responsible for determining the conformation of the 16S rRNA at the A site. The protein is Small ribosomal subunit protein uS14 of Rhizorhabdus wittichii (strain DSM 6014 / CCUG 31198 / JCM 15750 / NBRC 105917 / EY 4224 / RW1) (Sphingomonas wittichii).